The chain runs to 390 residues: DNA replication and repair protein RecF (390 aa).

30–37 provides a ligand contact to ATP; the sequence is GDNAQGKS.

The protein belongs to the RecF family.

It localises to the cytoplasm. Functionally, the RecF protein is involved in DNA metabolism; it is required for DNA replication and normal SOS inducibility. RecF binds preferentially to single-stranded, linear DNA. It also seems to bind ATP. The polypeptide is DNA replication and repair protein RecF (Trichodesmium erythraeum (strain IMS101)).